The chain runs to 155 residues: Endoribonuclease YbeY (155 aa).

The Zn(2+) site is built by His-114, His-118, and His-124.

It belongs to the endoribonuclease YbeY family. It depends on Zn(2+) as a cofactor.

It localises to the cytoplasm. In terms of biological role, single strand-specific metallo-endoribonuclease involved in late-stage 70S ribosome quality control and in maturation of the 3' terminus of the 16S rRNA. In Cronobacter sakazakii (strain ATCC BAA-894) (Enterobacter sakazakii), this protein is Endoribonuclease YbeY.